We begin with the raw amino-acid sequence, 729 residues long: Fatty acid oxidation complex subunit alpha (729 aa).

Residues 1–189 (MLYKGDTLYL…KIGLVDGVVK (189 aa)) form an enoyl-CoA hydratase/isomerase region. Substrate is bound at residue Asp-296. Positions 311 to 729 (ETPKQAAVLG…ARPVGDLKTA (419 aa)) are 3-hydroxyacyl-CoA dehydrogenase. NAD(+) is bound by residues Met-324, Asp-343, 400–402 (VVE), Lys-407, and Ser-429. The For 3-hydroxyacyl-CoA dehydrogenase activity role is filled by His-450. Asn-453 is a binding site for NAD(+). Substrate contacts are provided by Asn-500 and Tyr-660. Positions 707-729 (ARHNEPYYPPVEPARPVGDLKTA) are disordered.

In the N-terminal section; belongs to the enoyl-CoA hydratase/isomerase family. It in the C-terminal section; belongs to the 3-hydroxyacyl-CoA dehydrogenase family. As to quaternary structure, heterotetramer of two alpha chains (FadB) and two beta chains (FadA).

It carries out the reaction a (3S)-3-hydroxyacyl-CoA + NAD(+) = a 3-oxoacyl-CoA + NADH + H(+). The enzyme catalyses a (3S)-3-hydroxyacyl-CoA = a (2E)-enoyl-CoA + H2O. It catalyses the reaction a 4-saturated-(3S)-3-hydroxyacyl-CoA = a (3E)-enoyl-CoA + H2O. The catalysed reaction is (3S)-3-hydroxybutanoyl-CoA = (3R)-3-hydroxybutanoyl-CoA. It carries out the reaction a (3Z)-enoyl-CoA = a 4-saturated (2E)-enoyl-CoA. The enzyme catalyses a (3E)-enoyl-CoA = a 4-saturated (2E)-enoyl-CoA. It participates in lipid metabolism; fatty acid beta-oxidation. Functionally, involved in the aerobic and anaerobic degradation of long-chain fatty acids via beta-oxidation cycle. Catalyzes the formation of 3-oxoacyl-CoA from enoyl-CoA via L-3-hydroxyacyl-CoA. It can also use D-3-hydroxyacyl-CoA and cis-3-enoyl-CoA as substrate. The chain is Fatty acid oxidation complex subunit alpha from Escherichia coli O6:K15:H31 (strain 536 / UPEC).